Reading from the N-terminus, the 292-residue chain is Protease HtpX (292 aa).

Transmembrane regions (helical) follow at residues 5-25 (IFLFLLTNLAVLMLAGIVMSL) and 34-54 (SGLLVMAAIFGFGGSFISLLL). Position 140 (H140) interacts with Zn(2+). Residue E141 is part of the active site. H144 contacts Zn(2+). The next 2 helical transmembrane spans lie at 155–175 (LLQGVLNTFVIVLARVVGGII) and 193–213 (IIVFALEMVFGLFATMIAMWF). Position 218 (E218) interacts with Zn(2+).

This sequence belongs to the peptidase M48B family. Zn(2+) serves as cofactor.

Its subcellular location is the cell inner membrane. This Xanthomonas axonopodis pv. citri (strain 306) protein is Protease HtpX.